Here is a 117-residue protein sequence, read N- to C-terminus: DNA polymerase epsilon subunit 4 (117 aa).

The interval 1–36 is disordered; that stretch reads MAAAAAAGSGTPREEEGPAGEAAASQPQAPTSVPGA. A2 bears the N-acetylalanine mark. Phosphothreonine is present on T11. Positions 19–30 are enriched in low complexity; it reads AGEAAASQPQAP. S25 is modified (phosphoserine).

In terms of assembly, component of the DNA polymerase epsilon complex consisting of four subunits: the catalytic subunit POLE and the accessory subunits POLE2, POLE3 and POLE4. Interaction with POLE3 is a prerequisite for further binding with POLE and POLE2.

The protein localises to the nucleus. In terms of biological role, accessory component of the DNA polymerase epsilon complex. Participates in DNA repair and in chromosomal DNA replication. This Homo sapiens (Human) protein is DNA polymerase epsilon subunit 4 (POLE4).